Here is a 410-residue protein sequence, read N- to C-terminus: Zinc finger protein 322 (410 aa).

8 C2H2-type zinc fingers span residues Tyr-81–His-103, Tyr-109–His-131, Tyr-137–His-159, Tyr-165–His-187, Phe-193–His-215, Tyr-221–His-243, Tyr-249–His-271, and Tyr-277–His-299. The C2H2-type 9; degenerate zinc finger occupies Phe-303–His-325. A C2H2-type 10; degenerate zinc finger spans residues Tyr-361–His-383. Ser-400 is subject to Phosphoserine.

It belongs to the krueppel C2H2-type zinc-finger protein family. As to quaternary structure, interacts with POU5F1.

It localises to the nucleus. The protein resides in the cytoplasm. Transcriptional activator. Important for maintenance of pluripotency in embryonic stem cells. Binds directly to the POU5F1 distal enhancer and the NANOG proximal promoter, and enhances expression of both genes. Can also bind to numerous other gene promoters and regulates expression of many other pluripotency factors, either directly or indirectly. Promotes inhibition of MAPK signaling during embryonic stem cell differentiation. The chain is Zinc finger protein 322 (Znf322) from Mus musculus (Mouse).